The chain runs to 275 residues: Exosome complex component Rrp42 (275 aa).

The protein belongs to the RNase PH family. Rrp42 subfamily. In terms of assembly, component of the archaeal exosome complex. Forms a hexameric ring-like arrangement composed of 3 Rrp41-Rrp42 heterodimers. The hexameric ring associates with a trimer of Rrp4 and/or Csl4 subunits.

The protein resides in the cytoplasm. Functionally, non-catalytic component of the exosome, which is a complex involved in RNA degradation. Contributes to the structuring of the Rrp41 active site. The polypeptide is Exosome complex component Rrp42 (Saccharolobus islandicus (strain L.S.2.15 / Lassen #1) (Sulfolobus islandicus)).